The following is a 529-amino-acid chain: Corneodesmosin (529 aa).

The N-terminal stretch at 1 to 32 (MGSSRAPWMGRVGGHGMMALLLAGLLLPGTLA) is a signal peptide. Disordered stretches follow at residues 38 to 248 (FSDP…SVSG) and 383 to 492 (GSTG…SSAG). Low complexity-rich tracts occupy residues 58–83 (GKGDSSGFSSYSGSSSSGSSISSARS), 90–100 (GSSSGSSIAQG), 111–175 (GYSQ…NGSA), 189–231 (PSQP…SGGP), 392–408 (SPSSSRVPSSSSISSSS), and 426–441 (PGTGSFSSSSSSQSSG). N172 carries N-linked (GlcNAc...) asparagine glycosylation. The span at 449-467 (GSKSSSSGHPCMSVSSLTL) shows a compositional bias: polar residues.

The protein localises to the secreted. In terms of biological role, important for the epidermal barrier integrity. The protein is Corneodesmosin (CDSN) of Pan troglodytes (Chimpanzee).